Consider the following 252-residue polypeptide: Triosephosphate isomerase (252 aa).

10-12 (NWK) serves as a coordination point for substrate. Residue His-96 is the Electrophile of the active site. The active-site Proton acceptor is the Glu-168. Substrate contacts are provided by residues Gly-174, Ser-214, and 235 to 236 (GG).

This sequence belongs to the triosephosphate isomerase family. In terms of assembly, homodimer.

The protein resides in the cytoplasm. It catalyses the reaction D-glyceraldehyde 3-phosphate = dihydroxyacetone phosphate. It participates in carbohydrate biosynthesis; gluconeogenesis. It functions in the pathway carbohydrate degradation; glycolysis; D-glyceraldehyde 3-phosphate from glycerone phosphate: step 1/1. Its function is as follows. Involved in the gluconeogenesis. Catalyzes stereospecifically the conversion of dihydroxyacetone phosphate (DHAP) to D-glyceraldehyde-3-phosphate (G3P). The protein is Triosephosphate isomerase of Streptococcus mutans serotype c (strain ATCC 700610 / UA159).